A 95-amino-acid chain; its full sequence is MAPAELKRPDLIVPYKARVKANEEVGLSLVSTATCMAALFLRFKLIAWVAFILTFSNLLNANTSPSSSPTSMAFMGIAALVSTYLPQFLNTPNKT.

A helical membrane pass occupies residues 29–53 (LVSTATCMAALFLRFKLIAWVAFIL).

Its subcellular location is the membrane. This is an uncharacterized protein from Schizosaccharomyces pombe (strain 972 / ATCC 24843) (Fission yeast).